The primary structure comprises 1000 residues: Kinesin-like protein CIN8 (1000 aa).

A compositionally biased stretch (polar residues) spans methionine 1 to glycine 26. The segment at methionine 1 to histidine 28 is disordered. The region spanning asparagine 36–isoleucine 477 is the Kinesin motor domain. Residue glycine 128–threonine 135 coordinates ATP. Positions alanine 220–serine 242 are enriched in low complexity. Disordered stretches follow at residues alanine 220–proline 248 and lysine 260–glutamine 312. Polar residues predominate over residues serine 261–valine 276. The span at asparagine 277 to asparagine 301 shows a compositional bias: low complexity. A compositionally biased stretch (polar residues) spans glycine 302 to glutamine 312. 2 coiled-coil regions span residues methionine 518–histidine 615 and isoleucine 860–serine 904. A disordered region spans residues valine 970–glutamate 1000. A Phosphoserine modification is found at serine 972. Residues histidine 976–glutamate 1000 show a composition bias toward basic and acidic residues.

Belongs to the TRAFAC class myosin-kinesin ATPase superfamily. Kinesin family. BimC subfamily.

The protein localises to the cytoplasm. Its subcellular location is the cytoskeleton. The protein resides in the spindle. It localises to the mitochondrion. In terms of biological role, elongates the mitotic spindle by interacting with spindle microtubules to generate an outward force pushing spindle poles apart. Following spindle assembly, CIN8 and KIP1 apparently act to oppose a force, possibly generated by KAR3, that draws separated poles back together. In Saccharomyces cerevisiae (strain ATCC 204508 / S288c) (Baker's yeast), this protein is Kinesin-like protein CIN8 (CIN8).